The chain runs to 388 residues: NADH-quinone oxidoreductase subunit D 2 (388 aa).

Belongs to the complex I 49 kDa subunit family. NDH-1 is composed of 14 different subunits. Subunits NuoB, C, D, E, F, and G constitute the peripheral sector of the complex.

The protein localises to the cell inner membrane. The enzyme catalyses a quinone + NADH + 5 H(+)(in) = a quinol + NAD(+) + 4 H(+)(out). Its function is as follows. NDH-1 shuttles electrons from NADH, via FMN and iron-sulfur (Fe-S) centers, to quinones in the respiratory chain. The immediate electron acceptor for the enzyme in this species is believed to be ubiquinone. Couples the redox reaction to proton translocation (for every two electrons transferred, four hydrogen ions are translocated across the cytoplasmic membrane), and thus conserves the redox energy in a proton gradient. This chain is NADH-quinone oxidoreductase subunit D 2, found in Sorangium cellulosum (strain So ce56) (Polyangium cellulosum (strain So ce56)).